A 420-amino-acid chain; its full sequence is Gamma-glutamyl phosphate reductase (420 aa).

The protein belongs to the gamma-glutamyl phosphate reductase family.

It localises to the cytoplasm. It catalyses the reaction L-glutamate 5-semialdehyde + phosphate + NADP(+) = L-glutamyl 5-phosphate + NADPH + H(+). It participates in amino-acid biosynthesis; L-proline biosynthesis; L-glutamate 5-semialdehyde from L-glutamate: step 2/2. In terms of biological role, catalyzes the NADPH-dependent reduction of L-glutamate 5-phosphate into L-glutamate 5-semialdehyde and phosphate. The product spontaneously undergoes cyclization to form 1-pyrroline-5-carboxylate. This chain is Gamma-glutamyl phosphate reductase, found in Streptococcus pneumoniae (strain JJA).